The primary structure comprises 140 residues: Large ribosomal subunit protein uL14 (140 aa).

At serine 17 the chain carries Phosphoserine. Residue tyrosine 38 is modified to Phosphotyrosine.

This sequence belongs to the universal ribosomal protein uL14 family. In terms of assembly, component of the large ribosomal subunit.

It localises to the cytoplasm. Functionally, component of the large ribosomal subunit. The ribosome is a large ribonucleoprotein complex responsible for the synthesis of proteins in the cell. This Canis lupus familiaris (Dog) protein is Large ribosomal subunit protein uL14 (RPL23).